Consider the following 954-residue polypeptide: Endogenous retrovirus group K member 25 Pol protein (954 aa).

One can recognise a Reverse transcriptase domain in the interval 57-245; sequence LEKGHIEPSF…TPFHYLGMQI (189 aa). The LPQG motif lies at 161–164; it reads LPQG. A YXDD motif is present at residues 195–198; it reads YIDD. The RNase H type-1 domain occupies 460 to 588; it reads LENALTVFTD…ADLLVSSALI (129 aa). Mg(2+)-binding residues include Asp-469, Glu-497, Asp-515, and Asp-580. The Integrase-type zinc finger occupies 585 to 626; it reads SALIKAQELHALTHVNAAGLKNKFDVTWKLAKDIVQHCTQCQ. His-594, His-598, Cys-622, and Cys-625 together coordinate Zn(2+). The Integrase catalytic domain occupies 640–801; that stretch reads RGLCPNALWQ…TSAEQHLTGK (162 aa). Residues 809–857 constitute a DNA-binding region (integrase-type); the sequence is KLIWWKDNKNKTWEIGKVITWGRGFACVSPGENQLPVWIPTRHLKFYNE. Positions 862-888 are disordered; it reads AKKSTSAETETPQSSTVDSQDEQNGDV. The span at 867 to 879 shows a compositional bias: polar residues; the sequence is SAETETPQSSTVD.

This sequence belongs to the beta type-B retroviral polymerase family. HERV class-II K(HML-2) pol subfamily.

The catalysed reaction is DNA(n) + a 2'-deoxyribonucleoside 5'-triphosphate = DNA(n+1) + diphosphate. It catalyses the reaction Endonucleolytic cleavage to 5'-phosphomonoester.. Its function is as follows. Early post-infection, the reverse transcriptase converts the viral RNA genome into double-stranded viral DNA. The RNase H domain of the reverse transcriptase performs two functions. It degrades the RNA template and specifically removes the RNA primer from the RNA/DNA hybrid. Following nuclear import, the integrase catalyzes the insertion of the linear, double-stranded viral DNA into the host cell chromosome. Endogenous Pol proteins may have kept, lost or modified their original function during evolution. In Homo sapiens (Human), this protein is Endogenous retrovirus group K member 25 Pol protein (ERVK-25).